The primary structure comprises 196 residues: MSAVQLYLASGSPRRQELLTQLGYQFERVVVDVEECHQPSETAEQYVQRLSRDKATAGVKKINATKTAVATMPVLGADTIVVVDETILEKPKDFNDAQRMLNLLSGRQHQVMTSVTVATVEREETQLVVTDVWFKTLSEKEIEKYWQSGEPQDKAGSYGIQGLGGKFITRIEGSYYAVMGLPLVETDVMVQNFLNL.

D78 serves as the catalytic Proton acceptor.

Belongs to the Maf family. YhdE subfamily. A divalent metal cation is required as a cofactor.

It localises to the cytoplasm. The catalysed reaction is dTTP + H2O = dTMP + diphosphate + H(+). It carries out the reaction UTP + H2O = UMP + diphosphate + H(+). Its function is as follows. Nucleoside triphosphate pyrophosphatase that hydrolyzes dTTP and UTP. May have a dual role in cell division arrest and in preventing the incorporation of modified nucleotides into cellular nucleic acids. The sequence is that of dTTP/UTP pyrophosphatase from Photobacterium profundum (strain SS9).